Consider the following 239-residue polypeptide: Phosphoribosylaminoimidazole-succinocarboxamide synthase (239 aa).

The protein belongs to the SAICAR synthetase family.

The enzyme catalyses 5-amino-1-(5-phospho-D-ribosyl)imidazole-4-carboxylate + L-aspartate + ATP = (2S)-2-[5-amino-1-(5-phospho-beta-D-ribosyl)imidazole-4-carboxamido]succinate + ADP + phosphate + 2 H(+). It participates in purine metabolism; IMP biosynthesis via de novo pathway; 5-amino-1-(5-phospho-D-ribosyl)imidazole-4-carboxamide from 5-amino-1-(5-phospho-D-ribosyl)imidazole-4-carboxylate: step 1/2. This is Phosphoribosylaminoimidazole-succinocarboxamide synthase from Bacillus cereus (strain AH187).